The following is a 260-amino-acid chain: Indole-3-glycerol phosphate synthase (260 aa).

This sequence belongs to the TrpC family.

It catalyses the reaction 1-(2-carboxyphenylamino)-1-deoxy-D-ribulose 5-phosphate + H(+) = (1S,2R)-1-C-(indol-3-yl)glycerol 3-phosphate + CO2 + H2O. The protein operates within amino-acid biosynthesis; L-tryptophan biosynthesis; L-tryptophan from chorismate: step 4/5. This Bacteroides thetaiotaomicron (strain ATCC 29148 / DSM 2079 / JCM 5827 / CCUG 10774 / NCTC 10582 / VPI-5482 / E50) protein is Indole-3-glycerol phosphate synthase.